The sequence spans 166 residues: Large ribosomal subunit protein uL10 (166 aa).

Belongs to the universal ribosomal protein uL10 family. As to quaternary structure, part of the ribosomal stalk of the 50S ribosomal subunit. The N-terminus interacts with L11 and the large rRNA to form the base of the stalk. The C-terminus forms an elongated spine to which L12 dimers bind in a sequential fashion forming a multimeric L10(L12)X complex.

Its function is as follows. Forms part of the ribosomal stalk, playing a central role in the interaction of the ribosome with GTP-bound translation factors. This is Large ribosomal subunit protein uL10 from Aeromonas salmonicida (strain A449).